The following is a 644-amino-acid chain: DNA mismatch repair protein MutL (644 aa).

Disordered regions lie at residues 338-390 and 416-445; these read RPNA…ERPA and QPQE…DDTQ. Low complexity-rich tracts occupy residues 349–366 and 416–427; these read EATP…EASA and QPQEAAEEAAGT.

The protein belongs to the DNA mismatch repair MutL/HexB family.

This protein is involved in the repair of mismatches in DNA. It is required for dam-dependent methyl-directed DNA mismatch repair. May act as a 'molecular matchmaker', a protein that promotes the formation of a stable complex between two or more DNA-binding proteins in an ATP-dependent manner without itself being part of a final effector complex. The protein is DNA mismatch repair protein MutL of Chromohalobacter salexigens (strain ATCC BAA-138 / DSM 3043 / CIP 106854 / NCIMB 13768 / 1H11).